A 149-amino-acid chain; its full sequence is Large ribosomal subunit protein uL13 (149 aa).

This sequence belongs to the universal ribosomal protein uL13 family. In terms of assembly, part of the 50S ribosomal subunit.

Its function is as follows. This protein is one of the early assembly proteins of the 50S ribosomal subunit, although it is not seen to bind rRNA by itself. It is important during the early stages of 50S assembly. This is Large ribosomal subunit protein uL13 from Borrelia recurrentis (strain A1).